Here is a 175-residue protein sequence, read N- to C-terminus: Nucleoside triphosphate/diphosphate phosphatase (175 aa).

The active-site Proton donor is Arg-23. Positions 87, 103, 105, 107, 120, and 123 each coordinate Mg(2+).

It belongs to the Ntdp family. Requires Mg(2+) as cofactor.

It carries out the reaction a ribonucleoside 5'-triphosphate + H2O = a ribonucleoside 5'-diphosphate + phosphate + H(+). The catalysed reaction is a ribonucleoside 5'-diphosphate + H2O = a ribonucleoside 5'-phosphate + phosphate + H(+). Its function is as follows. Has nucleoside phosphatase activity towards nucleoside triphosphates and nucleoside diphosphates. The sequence is that of Nucleoside triphosphate/diphosphate phosphatase from Listeria innocua serovar 6a (strain ATCC BAA-680 / CLIP 11262).